The chain runs to 127 residues: Large ribosomal subunit protein bL17 (127 aa).

Belongs to the bacterial ribosomal protein bL17 family. Part of the 50S ribosomal subunit. Contacts protein L32.

This chain is Large ribosomal subunit protein bL17, found in Lactiplantibacillus plantarum (strain ATCC BAA-793 / NCIMB 8826 / WCFS1) (Lactobacillus plantarum).